Reading from the N-terminus, the 294-residue chain is Phosphatidylserine decarboxylase proenzyme (294 aa).

Active-site charge relay system; for autoendoproteolytic cleavage activity residues include Asp-92, His-149, and Ser-252. Ser-252 (schiff-base intermediate with substrate; via pyruvic acid; for decarboxylase activity) is an active-site residue. Ser-252 is modified (pyruvic acid (Ser); by autocatalysis).

It belongs to the phosphatidylserine decarboxylase family. PSD-B subfamily. Prokaryotic type I sub-subfamily. Heterodimer of a large membrane-associated beta subunit and a small pyruvoyl-containing alpha subunit. It depends on pyruvate as a cofactor. In terms of processing, is synthesized initially as an inactive proenzyme. Formation of the active enzyme involves a self-maturation process in which the active site pyruvoyl group is generated from an internal serine residue via an autocatalytic post-translational modification. Two non-identical subunits are generated from the proenzyme in this reaction, and the pyruvate is formed at the N-terminus of the alpha chain, which is derived from the carboxyl end of the proenzyme. The autoendoproteolytic cleavage occurs by a canonical serine protease mechanism, in which the side chain hydroxyl group of the serine supplies its oxygen atom to form the C-terminus of the beta chain, while the remainder of the serine residue undergoes an oxidative deamination to produce ammonia and the pyruvoyl prosthetic group on the alpha chain. During this reaction, the Ser that is part of the protease active site of the proenzyme becomes the pyruvoyl prosthetic group, which constitutes an essential element of the active site of the mature decarboxylase.

It is found in the cell membrane. It carries out the reaction a 1,2-diacyl-sn-glycero-3-phospho-L-serine + H(+) = a 1,2-diacyl-sn-glycero-3-phosphoethanolamine + CO2. Its pathway is phospholipid metabolism; phosphatidylethanolamine biosynthesis; phosphatidylethanolamine from CDP-diacylglycerol: step 2/2. Its function is as follows. Catalyzes the formation of phosphatidylethanolamine (PtdEtn) from phosphatidylserine (PtdSer). This Bordetella avium (strain 197N) protein is Phosphatidylserine decarboxylase proenzyme.